The following is a 402-amino-acid chain: Phosphoglycerate kinase (402 aa).

Residues 29–31 (DFN), arginine 45, 69–72 (HLGR), arginine 125, and arginine 158 each bind substrate. ATP-binding positions include lysine 209, glutamate 331, and 357-360 (GGDT).

Belongs to the phosphoglycerate kinase family.

It is found in the cytoplasm. It catalyses the reaction (2R)-3-phosphoglycerate + ATP = (2R)-3-phospho-glyceroyl phosphate + ADP. It functions in the pathway carbohydrate degradation; glycolysis; pyruvate from D-glyceraldehyde 3-phosphate: step 2/5. This is Phosphoglycerate kinase (pgk) from Helicobacter pylori (strain ATCC 700392 / 26695) (Campylobacter pylori).